A 767-amino-acid polypeptide reads, in one-letter code: Protein SQS1 (767 aa).

The segment covering 1–17 (MAKRHSHYQGSRRRHAR) has biased composition (basic residues). Residues 1–60 (MAKRHSHYQGSRRRHARGSNSKKAGRGNAKGIQGRKIKKKPTPTNSWHNSSIPLGEGDLD) are disordered. The span at 42 to 52 (TPTNSWHNSSI) shows a compositional bias: polar residues. Phosphoserine is present on Ser105. Over residues 176-185 (EDSENEDDDS) the composition is skewed to acidic residues. The segment at 176–200 (EDSENEDDDSQNSPSTDHSLSSNES) is disordered. Phosphoserine is present on residues Ser217, Ser255, Ser334, Ser343, and Ser345. The disordered stretch occupies residues 466 to 493 (YSDIPISDSSDEGDSYEGDSYEDDEDMA). Residues 474-492 (SSDEGDSYEGDSYEDDEDM) show a composition bias toward acidic residues. One can recognise an R3H domain in the interval 594-656 (GLHIQNIKDE…HTSVVVEKIK (63 aa)). The G-patch domain maps to 720–767 (NENIGRRMLEKLGWKSGEGLGIQGNKGISEPIFAKIKKNRSGLRHSES).

It belongs to the SQS1 family.

Its subcellular location is the cytoplasm. The protein localises to the nucleus. In terms of biological role, may be involved in splicing since overexpression antagonizes the suppression of splicing defects by SPP382 mutants. The sequence is that of Protein SQS1 (SQS1) from Saccharomyces cerevisiae (strain YJM789) (Baker's yeast).